The sequence spans 192 residues: uncharacterized protein (192 aa).

The region spanning 72 to 192 (GATVLLIVPP…SLVISEFSLV (121 aa)) is the B12-binding domain.

This is an uncharacterized protein from Rhodobacter capsulatus (Rhodopseudomonas capsulata).